A 108-amino-acid chain; its full sequence is Heme-degrading monooxygenase HmoA (108 aa).

An ABM domain is found at 2–95; that stretch reads FVQLRKMTVK…DYLISTEVSM (94 aa). Histidine 76 provides a ligand contact to heme.

The protein belongs to the antibiotic biosynthesis monooxygenase family. As to quaternary structure, homodimer.

Its subcellular location is the cytoplasm. It carries out the reaction heme b + 3 reduced [NADPH--hemoprotein reductase] + 3 O2 = biliverdin IXalpha + CO + Fe(2+) + 3 oxidized [NADPH--hemoprotein reductase] + 3 H2O + H(+). In terms of biological role, allows bacterial pathogens to use the host heme as an iron source. Catalyzes the oxidative degradation of the heme macrocyclic porphyrin ring in the presence of a suitable electron donor such as ascorbate or NADPH--cytochrome P450 reductase, with subsequent release of free iron. The protein is Heme-degrading monooxygenase HmoA (hmoA) of Bacillus subtilis (strain 168).